Consider the following 536-residue polypeptide: Prolyl 3-hydroxylase sudestada1 (536 aa).

Residues 1–35 form a disordered region; that stretch reads METSSSSPVKPRRKDKDEDGRAEQEDSADQVGEPH. Residues 14 to 24 show a composition bias toward basic and acidic residues; the sequence is KDKDEDGRAEQ. Residues 165–275 form the Fe2OG dioxygenase domain; it reads KLDYVSASCS…RLTINGWFHG (111 aa). Residues histidine 185 and aspartate 187 each coordinate Fe cation. Position 199 (tyrosine 199) interacts with 2-oxoglutarate. Histidine 254 lines the Fe cation pocket. Arginine 266 is a binding site for 2-oxoglutarate. The tract at residues 467–486 is disordered; it reads PTAKAPTDGRRSDYDDEEED.

The protein belongs to the TPA1 family. As to quaternary structure, monomer. The cofactor is Fe(2+). Requires L-ascorbate as cofactor. In third-instar larval tissues,highly expressed in the fat body, with significant expression in other organs including the brain, salivary glands, imaginal disks and gut.

Its subcellular location is the nucleus. The protein resides in the cytoplasm. The catalysed reaction is [ribosomal protein uS12]-L-proline + 2-oxoglutarate + O2 = [ribosomal protein uS12]-(3S)-3-hydroxy-L-proline + succinate + CO2. Prolyl 3-hydroxylase that catalyzes 3-hydroxylation of 'Pro-62' of small ribosomal subunit uS12 (RpS23), thereby regulating protein translation termination efficiency. The polypeptide is Prolyl 3-hydroxylase sudestada1 (sud1) (Drosophila melanogaster (Fruit fly)).